Here is a 217-residue protein sequence, read N- to C-terminus: Peptide methionine sulfoxide reductase MsrA 1 (217 aa).

C57 is a catalytic residue.

Belongs to the MsrA Met sulfoxide reductase family.

It carries out the reaction L-methionyl-[protein] + [thioredoxin]-disulfide + H2O = L-methionyl-(S)-S-oxide-[protein] + [thioredoxin]-dithiol. The enzyme catalyses [thioredoxin]-disulfide + L-methionine + H2O = L-methionine (S)-S-oxide + [thioredoxin]-dithiol. Functionally, has an important function as a repair enzyme for proteins that have been inactivated by oxidation. Catalyzes the reversible oxidation-reduction of methionine sulfoxide in proteins to methionine. This is Peptide methionine sulfoxide reductase MsrA 1 (msrA1) from Rhizobium meliloti (strain 1021) (Ensifer meliloti).